Consider the following 429-residue polypeptide: Histidine--tRNA ligase (429 aa).

The protein belongs to the class-II aminoacyl-tRNA synthetase family. As to quaternary structure, homodimer.

Its subcellular location is the cytoplasm. The enzyme catalyses tRNA(His) + L-histidine + ATP = L-histidyl-tRNA(His) + AMP + diphosphate + H(+). The sequence is that of Histidine--tRNA ligase from Pseudomonas syringae pv. tomato (strain ATCC BAA-871 / DC3000).